We begin with the raw amino-acid sequence, 267 residues long: Eukaryotic translation initiation factor 3 subunit J (267 aa).

2 disordered regions span residues 1 to 128 (MAPS…DIDL) and 220 to 241 (KMRE…KTKV). Over residues 28-46 (DEEEEDVLDSWDAAEDSEV) the composition is skewed to acidic residues. The stretch at 44–96 (SEVEREKAAKAAAAAAKAEAEAAAKKKSKAQRIEEHKQERKKQAEANESDEDS) forms a coiled coil. Residues 74 to 88 (QRIEEHKQERKKQAE) show a composition bias toward basic and acidic residues. The span at 90–100 (NESDEDSDEDE) shows a compositional bias: acidic residues. Basic and acidic residues-rich tracts occupy residues 108 to 121 (RRTE…HAQD) and 220 to 231 (KMREERAADKGN).

The protein belongs to the eIF-3 subunit J family. Component of the eukaryotic translation initiation factor 3 (eIF-3) complex.

The protein resides in the cytoplasm. Its function is as follows. Component of the eukaryotic translation initiation factor 3 (eIF-3) complex, which is involved in protein synthesis of a specialized repertoire of mRNAs and, together with other initiation factors, stimulates binding of mRNA and methionyl-tRNAi to the 40S ribosome. The eIF-3 complex specifically targets and initiates translation of a subset of mRNAs involved in cell proliferation. The polypeptide is Eukaryotic translation initiation factor 3 subunit J (hcr1) (Neosartorya fischeri (strain ATCC 1020 / DSM 3700 / CBS 544.65 / FGSC A1164 / JCM 1740 / NRRL 181 / WB 181) (Aspergillus fischerianus)).